Reading from the N-terminus, the 454-residue chain is Aquaglyceroporin-9 (454 aa).

Residues methionine 1–glutamate 186 lie on the Cytoplasmic side of the membrane. The chain crosses the membrane as a helical span at residues phenylalanine 187–serine 207. The Extracellular portion of the chain corresponds to serine 208–serine 216. A helical membrane pass occupies residues isoleucine 217 to alanine 237. At histidine 238–lysine 257 the chain is on the cytoplasmic side. An NPA 1 motif is present at residues asparagine 240–alanine 242. A helical membrane pass occupies residues phenylalanine 258–alanine 278. Residues asparagine 279 to lysine 316 are Extracellular-facing. A glycan (N-linked (GlcNAc...) asparagine) is linked at asparagine 299. The chain crosses the membrane as a helical span at residues threonine 317–leucine 337. Residues glutamine 338–leucine 351 are Cytoplasmic-facing. Residues glycine 352–isoleucine 372 form a helical membrane-spanning segment. The short motif at asparagine 373 to alanine 375 is the NPA 2 element. Topologically, residues asparagine 373 to valine 403 are extracellular. A helical transmembrane segment spans residues proline 404 to phenylalanine 424. Over threonine 425 to valine 454 the chain is Cytoplasmic.

It belongs to the MIP/aquaporin (TC 1.A.8) family.

It is found in the membrane. The catalysed reaction is H2O(in) = H2O(out). The enzyme catalyses glycerol(in) = glycerol(out). Its function is as follows. Water channel required to facilitate the transport of water across membranes. May play a role in the vegetative growth and pathogenicity. This chain is Aquaglyceroporin-9, found in Botryotinia fuckeliana (strain B05.10) (Noble rot fungus).